The chain runs to 306 residues: MASKILFIGGTGYIGKFIVEASAKAGHPTFVLVRESTLSNPAKSVVIYNFKNLGVNFLIGDLFDHESLVKAIKQVDVVISTVGHAQLVEQDRIIAAIKEAGNVKRFFPSEFGNDVDRVNAVEPAKSAFATKANVRRAIEAEGIPYTYVSSNFFSGYFLLSFNQPGATAPPRDKVVILGDGNPKAVFNKEDDIATYTIKAVDDPRTLNKILYIKPPANTISFNDLVSLWEKKIGKTLERIYVPEEQLLKNIQEASVPVNVVLSIGHSVFVKGDHTNFEIEPSFGVEASELYPDVKYTTVDEYLKQFV.

NADP(+) is bound by residues 9-15 (GGTGYIG), R34, and K43. K131 (proton acceptor) is an active-site residue. R135 provides a ligand contact to NADP(+).

The protein belongs to the NmrA-type oxidoreductase family. Isoflavone reductase subfamily.

The catalysed reaction is (-)-dehydrodiconiferyl alcohol + NADPH + H(+) = (S)-isodihydrodehydrodiconiferyl alcohol + NADP(+). The enzyme catalyses (+)-dehydrodiconiferyl alcohol + NADPH + H(+) = (R)-isodihydrodehydrodiconiferyl alcohol + NADP(+). It carries out the reaction (2R,3S)-dihydrodehydrodiconiferyl alcohol + NADPH + H(+) = (S)-tetrahydrodehydrodiconiferyl alcohol + NADP(+). It catalyses the reaction (2S,3R)-dihydrodehydrodiconiferyl alcohol + NADPH + H(+) = (R)-tetrahydrodehydrodiconiferyl alcohol + NADP(+). Its function is as follows. Oxidoreductase involved in lignan biosynthesis. Catalyzes the NADPH-dependent reduction of phenylcoumaran benzylic ethers. Converts dehydrodiconiferyl alcohol (DDC) to isodihydrodehydrodiconiferyl alcohol (IDDDC), and dihydrodehydrodiconiferyl alcohol (DDDC) to tetrahydrodehydrodiconiferyl alcohol (TDDC). The polypeptide is Phenylcoumaran benzylic ether reductase POP1 (Populus trichocarpa (Western balsam poplar)).